Consider the following 62-residue polypeptide: Large ribosomal subunit protein bL28 (62 aa).

Residues 1 to 28 are disordered; the sequence is MARVCAITGRKARSGNSRSHAMNATKRK.

The protein belongs to the bacterial ribosomal protein bL28 family.

The sequence is that of Large ribosomal subunit protein bL28 from Bacillus cytotoxicus (strain DSM 22905 / CIP 110041 / 391-98 / NVH 391-98).